We begin with the raw amino-acid sequence, 331 residues long: Ketol-acid reductoisomerase (NADP(+)) (331 aa).

The KARI N-terminal Rossmann domain maps to 2 to 182; sequence VEIYYDDDAN…GGTRAGALRT (181 aa). Residues 25 to 28, Ser-51, and Ser-53 contribute to the NADP(+) site; that span reads FGSQ. Residue His-108 is part of the active site. Gly-134 contributes to the NADP(+) binding site. A KARI C-terminal knotted domain is found at 183-328; the sequence is TFTEETETDL…GKLRPMMSWI (146 aa). Residues Asp-191, Glu-195, Glu-227, and Glu-231 each contribute to the Mg(2+) site. Ser-252 contacts substrate.

Belongs to the ketol-acid reductoisomerase family. Mg(2+) serves as cofactor.

It catalyses the reaction (2R)-2,3-dihydroxy-3-methylbutanoate + NADP(+) = (2S)-2-acetolactate + NADPH + H(+). The enzyme catalyses (2R,3R)-2,3-dihydroxy-3-methylpentanoate + NADP(+) = (S)-2-ethyl-2-hydroxy-3-oxobutanoate + NADPH + H(+). The protein operates within amino-acid biosynthesis; L-isoleucine biosynthesis; L-isoleucine from 2-oxobutanoate: step 2/4. It functions in the pathway amino-acid biosynthesis; L-valine biosynthesis; L-valine from pyruvate: step 2/4. In terms of biological role, involved in the biosynthesis of branched-chain amino acids (BCAA). Catalyzes an alkyl-migration followed by a ketol-acid reduction of (S)-2-acetolactate (S2AL) to yield (R)-2,3-dihydroxy-isovalerate. In the isomerase reaction, S2AL is rearranged via a Mg-dependent methyl migration to produce 3-hydroxy-3-methyl-2-ketobutyrate (HMKB). In the reductase reaction, this 2-ketoacid undergoes a metal-dependent reduction by NADPH to yield (R)-2,3-dihydroxy-isovalerate. The polypeptide is Ketol-acid reductoisomerase (NADP(+)) (Parafrankia sp. (strain EAN1pec)).